Here is a 236-residue protein sequence, read N- to C-terminus: Bax inhibitor 1 (236 aa).

Residues 1-29 (MNIFDRKINFDALFKFSHITPSTQQHLKK) lie on the Cytoplasmic side of the membrane. Residue lysine 7 forms a Glycyl lysine isopeptide (Lys-Gly) (interchain with G-Cter in ubiquitin) linkage. Residues 30–50 (VYASFALCMFVAAAGAYIHVV) form a helical membrane-spanning segment. The Lumenal segment spans residues 51–52 (TH). The helical transmembrane segment at 53–73 (FIQAGLLSALGSLGLMIWLMA) threads the bilayer. Residues 74–86 (TPHSHETEQKRLG) are Cytoplasmic-facing. A helical membrane pass occupies residues 87–107 (LLAGFAFLTGVGLGPALDLCI). The Lumenal portion of the chain corresponds to 108-112 (AINPS). Residues 113-133 (ILPTAFMGTAMIFTCFTLSAL) traverse the membrane as a helical segment. Over 134–139 (YARRRS) the chain is Cytoplasmic. Residues 140–160 (YLFLGGILMSAMSLMLLSSLG) form a helical membrane-spanning segment. Residues 161-166 (NLFFGS) are Lumenal-facing. Residues 167–187 (VWLFQANLYMGLVVMCGFVLF) traverse the membrane as a helical segment. At 188–206 (DTQLIIEKAENGDKDYIWH) the chain is on the cytoplasmic side. Positions 207–227 (CVDLFLDFVTLFRKLMMILAM) form an intramembrane region, helical. Topologically, residues 228–236 (NEKDKKKKK) are cytoplasmic.

The protein belongs to the BI1 family. Interacts with BCL2 and BCL2L1. Interacts with ERN1. Ubiquitinated by BFAR, leading to proteasomal degradation.

It localises to the endoplasmic reticulum membrane. In terms of biological role, endoplasmic reticulum (ER)-resident protein that confers cellular protection as an anti-apoptotic protein by limiting multiple stress-inducing pathways surrounding the endoplasmic reticulum and mitochondria. Inhibits the activities of the key sensor for the endoplasmic reticulum unfolded protein response IRE1alpha/ERN1 both directly and by blocking BAX/BAK binding. Modulates ER calcium homeostasis by acting as a calcium-leak channel. Negatively regulates autophagy and autophagosome formation, especially during periods of nutrient deprivation, and reduces cell survival during starvation. This Bos taurus (Bovine) protein is Bax inhibitor 1 (TMBIM6).